The sequence spans 385 residues: DNA replication and repair protein RecF (385 aa).

30–37 (GPNGYGKT) provides a ligand contact to ATP.

It belongs to the RecF family.

The protein resides in the cytoplasm. In terms of biological role, the RecF protein is involved in DNA metabolism; it is required for DNA replication and normal SOS inducibility. RecF binds preferentially to single-stranded, linear DNA. It also seems to bind ATP. The sequence is that of DNA replication and repair protein RecF from Mycobacterium tuberculosis (strain ATCC 25177 / H37Ra).